The primary structure comprises 310 residues: Isoflavone reductase homolog A622-like (310 aa).

NADP(+) is bound by residues 13-19, arginine 38, and lysine 47; that span reads GGTGYIG. Catalysis depends on lysine 135, which acts as the Proton acceptor. Residue arginine 139 participates in NADP(+) binding.

This sequence belongs to the NmrA-type oxidoreductase family. Isoflavone reductase subfamily. As to quaternary structure, monomer. In terms of tissue distribution, expressed in roots.

The protein resides in the cytoplasm. The protein operates within alkaloid biosynthesis; nicotine biosynthesis. Functionally, involved in the biosynthesis of pyridine alkaloid natural products, leading mainly to the production of anabasine, anatabine, nicotine and nornicotine, effective deterrents against herbivores with antiparasitic and pesticide properties (neurotoxins); nornicotine serves as the precursor in the synthesis of the carcinogen compound N'-nitrosonornicotine (NNN). Reductase that may be involved in a late step of tobacco alkaloid biosynthesis. Maybe involved in either the formation of a nicotinic acid-derived precursor or the final condensation reaction of tobacco alkaloids. The sequence is that of Isoflavone reductase homolog A622-like from Nicotiana tabacum (Common tobacco).